The sequence spans 337 residues: Anthranilate phosphoribosyltransferase (337 aa).

Residues Gly-81, 84–85 (GD), Ser-89, 91–94 (NVST), 109–117 (KHGNRALSS), and Ala-121 each bind 5-phospho-alpha-D-ribose 1-diphosphate. Residue Gly-81 participates in anthranilate binding. A Mg(2+)-binding site is contributed by Ser-93. Anthranilate is bound at residue Asn-112. Position 167 (Arg-167) interacts with anthranilate. Residues Asp-226 and Glu-227 each coordinate Mg(2+).

Belongs to the anthranilate phosphoribosyltransferase family. In terms of assembly, homodimer. Requires Mg(2+) as cofactor.

It carries out the reaction N-(5-phospho-beta-D-ribosyl)anthranilate + diphosphate = 5-phospho-alpha-D-ribose 1-diphosphate + anthranilate. Its pathway is amino-acid biosynthesis; L-tryptophan biosynthesis; L-tryptophan from chorismate: step 2/5. Catalyzes the transfer of the phosphoribosyl group of 5-phosphorylribose-1-pyrophosphate (PRPP) to anthranilate to yield N-(5'-phosphoribosyl)-anthranilate (PRA). In Bradyrhizobium sp. (strain BTAi1 / ATCC BAA-1182), this protein is Anthranilate phosphoribosyltransferase.